Reading from the N-terminus, the 178-residue chain is Caveolin-1 (178 aa).

An N-acetylserine modification is found at serine 2. Serine 2 carries the post-translational modification Phosphoserine. A required for homooligomerization region spans residues 2–94; it reads SGGKYVDSEG…WKASFTTFTV (93 aa). Over 2-104 the chain is Cytoplasmic; sequence SGGKYVDSEG…TKYWFYRLLS (103 aa). An N6-acetyllysine; alternate modification is found at lysine 5. Residue lysine 5 forms a Glycyl lysine isopeptide (Lys-Gly) (interchain with G-Cter in ubiquitin); alternate linkage. Tyrosine 6 carries the phosphotyrosine modification. The residue at position 9 (serine 9) is a Phosphoserine. Tyrosine 14 carries the phosphotyrosine; by ABL1 modification. Tyrosine 25 bears the Phosphotyrosine mark. Glycyl lysine isopeptide (Lys-Gly) (interchain with G-Cter in ubiquitin) cross-links involve residues lysine 26, lysine 30, lysine 39, lysine 47, and lysine 57. Residues 82–94 are interaction with CAVIN3; it reads DGIWKASFTTFTV. The helical intramembrane region spans 105-125; sequence ALFGIPMALIWGIYFAILSFL. Topologically, residues 126–178 are cytoplasmic; that stretch reads HIWAVVPCIKSFLIEIQCISRVYSIYVHTFCDPLFEAIGKIFSNIRINTQKEI. The interval 131-142 is interacts with SPRY1, SPRY2, SPRY3 and SPRY4; it reads VPCIKSFLIEIQ. S-palmitoyl cysteine attachment occurs at residues cysteine 133, cysteine 143, and cysteine 156. An interacts with SPRY1, SPRY2, and SPRY4 region spans residues 149 to 160; that stretch reads SIYVHTFCDPLF. The interacts with SPRY1, SPRY2, SPRY3 and SPRY4 stretch occupies residues 167-178; that stretch reads FSNIRINTQKEI.

The protein belongs to the caveolin family. In terms of assembly, homooligomer. Interacts with GLIPR2. Interacts with NOSTRIN. Interacts with SNAP25 and STX1A. Interacts (via the N-terminus) with DPP4; the interaction is direct. Interacts with CTNNB1, CDH1 and JUP. Interacts with PACSIN2; this interaction induces membrane tubulation. Interacts with SLC7A9. Interacts with BMX and BTK. Interacts with TGFBR1. Interacts with CAVIN3 (via leucine-zipper domain) in a cholesterol-sensitive manner. Interacts with CAVIN1. Interacts with EHD2 in a cholesterol-dependent manner. Forms a ternary complex with UBXN6 and VCP; mediates CAV1 targeting to lysosomes for degradation. Interacts with ABCG1; this interaction regulates ABCG1-mediated cholesterol efflux. Interacts with NEU3; this interaction enhances NEU3 sialidase activity within caveola. Interacts (via C-terminus) with SPRY1, SPRY2 (via C-terminus), SPRY3, and SPRY4. Interacts with IGFBP5; this interaction allows trafficking of IGFBP5 from the plasma membrane to the nucleus. Phosphorylated at Tyr-14 by ABL1 in response to oxidative stress. Post-translationally, ubiquitinated. Undergo monoubiquitination and multi- and/or polyubiquitination. Monoubiquitination of N-terminal lysines promotes integration in a ternary complex with UBXN6 and VCP which promotes oligomeric CAV1 targeting to lysosomes for degradation. Ubiquitinated by ZNRF1; leading to degradation and modulation of the TLR4-mediated immune response.

It localises to the golgi apparatus membrane. The protein localises to the cell membrane. Its subcellular location is the membrane. It is found in the caveola. The protein resides in the membrane raft. May act as a scaffolding protein within caveolar membranes. Forms a stable heterooligomeric complex with CAV2 that targets to lipid rafts and drives caveolae formation. Mediates the recruitment of CAVIN proteins (CAVIN1/2/3/4) to the caveolae. Interacts directly with G-protein alpha subunits and can functionally regulate their activity. Involved in the costimulatory signal essential for T-cell receptor (TCR)-mediated T-cell activation. Its binding to DPP4 induces T-cell proliferation and NF-kappa-B activation in a T-cell receptor/CD3-dependent manner. Recruits CTNNB1 to caveolar membranes and may regulate CTNNB1-mediated signaling through the Wnt pathway. Negatively regulates TGFB1-mediated activation of SMAD2/3 by mediating the internalization of TGFBR1 from membrane rafts leading to its subsequent degradation. Binds 20(S)-hydroxycholesterol (20(S)-OHC). The polypeptide is Caveolin-1 (CAV1) (Bos taurus (Bovine)).